Reading from the N-terminus, the 296-residue chain is NAD kinase (296 aa).

Asp-74 serves as the catalytic Proton acceptor. Residues 74 to 75 (DG), 148 to 149 (ND), Arg-176, Asp-178, and 189 to 194 (TAYALS) each bind NAD(+).

The protein belongs to the NAD kinase family. A divalent metal cation is required as a cofactor.

The protein localises to the cytoplasm. It carries out the reaction NAD(+) + ATP = ADP + NADP(+) + H(+). Involved in the regulation of the intracellular balance of NAD and NADP, and is a key enzyme in the biosynthesis of NADP. Catalyzes specifically the phosphorylation on 2'-hydroxyl of the adenosine moiety of NAD to yield NADP. This is NAD kinase from Nitrosomonas europaea (strain ATCC 19718 / CIP 103999 / KCTC 2705 / NBRC 14298).